Here is a 77-residue protein sequence, read N- to C-terminus: Conotoxin VnMEKL-023 (77 aa).

An N-terminal signal peptide occupies residues 1–19 (MQKLTILLLVAAVLMSTQA). The propeptide occupies 20–37 (LIKGGGEKRPKEKIRFLS). 3 disulfides stabilise this stretch: C51/C65, C58/C69, and C64/C74.

The protein belongs to the conotoxin O2 superfamily. Expressed by the venom duct.

The protein localises to the secreted. This chain is Conotoxin VnMEKL-023, found in Conus ventricosus (Mediterranean cone).